We begin with the raw amino-acid sequence, 150 residues long: Spore germination protein GerT (150 aa).

It localises to the spore coat. Its function is as follows. Involved in spore germination. This chain is Spore germination protein GerT (gerT), found in Bacillus licheniformis (strain ATCC 14580 / DSM 13 / JCM 2505 / CCUG 7422 / NBRC 12200 / NCIMB 9375 / NCTC 10341 / NRRL NRS-1264 / Gibson 46).